The primary structure comprises 240 residues: Protein MGARP (240 aa).

The Cytoplasmic portion of the chain corresponds to 1 to 40; it reads MYLRRAVSKTLALPLRAPPNPAPLGKDASLRRMSSNRFPG. Residues 41–63 traverse the membrane as a helical; Anchor for type IV membrane protein segment; the sequence is SSGSNMIYYLVVGVTVSAGGYYA. The Mitochondrial intermembrane segment spans residues 64–240; sequence YKTVTSDQAK…VGSEAASAQG (177 aa). Positions 166 to 240 are disordered; it reads RETTEVNPET…VGSEAASAQG (75 aa). Low complexity predominate over residues 170–181; it reads EVNPETTPEVTN. A compositionally biased stretch (basic and acidic residues) spans 191–201; that stretch reads DNDKDTTKNET. A compositionally biased stretch (acidic residues) spans 202 to 213; it reads SDEYAELEEENS. The segment covering 228-240 has biased composition (low complexity); the sequence is EASVGSEAASAQG.

Interacts with RHOT1/Miro-1, TRAK1/OIP106 and TRAK2/GRIF1. Interacts with RHOT2/Miro-2. In terms of tissue distribution, expressed in the brain, adrenal gland and corneal endothelium (CE). Expressed in steroid-producing cells of the ovary and testis (at protein level). Expressed in steroid-producing cells of the ovary and testis. Weakly expressed in placenta. Expressed in corneal endothelial cells.

It localises to the mitochondrion. The protein localises to the mitochondrion outer membrane. Its subcellular location is the mitochondrion inner membrane. Plays a role in the trafficking of mitochondria along microtubules. Regulates the kinesin-mediated axonal transport of mitochondria to nerve terminals along microtubules during hypoxia. Participates in the translocation of TRAK2/GRIF1 from the cytoplasm to the mitochondrion. Also plays a role in steroidogenesis through maintenance of mitochondrial abundance and morphology. Plays an inhibitory role during neocortex development by regulating mitochondrial morphology, distribution and motility in neocortical neurons. The polypeptide is Protein MGARP (MGARP) (Homo sapiens (Human)).